The following is a 127-amino-acid chain: uncharacterized protein (127 aa).

Disordered regions lie at residues 1–22 (MLPAGCWNDTSRDGPGFRKMKG) and 53–106 (LVGK…PGPK). Over residues 76–95 (PNGEAHAEQARRKISVEEKQ) the composition is skewed to basic and acidic residues.

It localises to the mitochondrion. This is an uncharacterized protein from Arabidopsis thaliana (Mouse-ear cress).